The following is a 463-amino-acid chain: UDP-glucosyltransferase A1 (463 aa).

Belongs to the UDP-glycosyltransferase family.

The catalysed reaction is 18-hydroxy-(9Z)-octadecenoate + UDP-alpha-D-glucose = (9Z)-18-hydroxyoctadec-9-enoate 18-O-beta-D-glucoside + UDP + H(+). It catalyses the reaction 17-hydroxy-(9Z)-octadecenoate + UDP-alpha-D-glucose = (9Z)-17-hydroxyoctadec-9-enoate 17-O-beta-D-glucoside + UDP + H(+). Functionally, catalyzes the first glycosylation step of sophorolipid biosynthesis, the coupling of glucose to a hydroxylated fatty acid to give rise to a glucolipid. Can glycosylate all hydroxyl fatty acids generated by cytochrome P450 monooxygenases CYP52M1, CYP52N1 and CYP52E3 into their corresponding glucolipids. Main products are 17-O- and 18-O-(beta-D-glucopyranosyl)-octadecenoic acids. The sequence is that of UDP-glucosyltransferase A1 from Starmerella bombicola (Yeast).